The sequence spans 280 residues: Diaminopimelate epimerase (280 aa).

Residues Asn11 and Asn62 each coordinate substrate. Cys71 acts as the Proton donor in catalysis. Substrate contacts are provided by residues 72-73, Asn160, Asn193, and 211-212; these read GN and ER. The active-site Proton acceptor is Cys220. 221–222 is a binding site for substrate; sequence GT.

Belongs to the diaminopimelate epimerase family. As to quaternary structure, homodimer.

The protein resides in the cytoplasm. It catalyses the reaction (2S,6S)-2,6-diaminopimelate = meso-2,6-diaminopimelate. It functions in the pathway amino-acid biosynthesis; L-lysine biosynthesis via DAP pathway; DL-2,6-diaminopimelate from LL-2,6-diaminopimelate: step 1/1. In terms of biological role, catalyzes the stereoinversion of LL-2,6-diaminopimelate (L,L-DAP) to meso-diaminopimelate (meso-DAP), a precursor of L-lysine and an essential component of the bacterial peptidoglycan. The chain is Diaminopimelate epimerase from Acetivibrio thermocellus (strain ATCC 27405 / DSM 1237 / JCM 9322 / NBRC 103400 / NCIMB 10682 / NRRL B-4536 / VPI 7372) (Clostridium thermocellum).